We begin with the raw amino-acid sequence, 193 residues long: HMG-Y-related protein A (193 aa).

In terms of domain architecture, H15 spans 11 to 81 (PIPPYPEMIL…LKNNYFRAGA (71 aa)). The disordered stretch occupies residues 75–193 (NYFRAGAPDA…PAVPSETAAA (119 aa)). The Nuclear localization signal 1 (NLS) motif lies at 86-92 (PKRGRGR). 4 DNA-binding regions (a.T hook) span residues 87–98 (KRGRGRPPKARD), 113–124 (GRGRGRPPKAKS), 138–149 (PKPRGRPPKKAK), and 173–184 (KRGRGRPPKVRP). The Nuclear localization signal 2 (NLS) signature appears at 145–149 (PKKAK).

Belongs to the histone H1/H5 family. In terms of processing, phosphorylated by CDK, this phosphorylation prevents DNA-binding. Motility is increased when hypophosphorylated. Acetylated.

The protein localises to the nucleus. It is found in the nucleolus. In terms of biological role, binds A/T-rich DNA (e.g. present in the storage gamma-zein gene promoter) with a highly dynamic distribution into the nucleus. Probably involved in endosperm development, during cells shift from a mitotic cycle to endoreduplication leading to massive synthesis of storage proteins (zeins) and starch. This chain is HMG-Y-related protein A, found in Zea mays (Maize).